The primary structure comprises 1972 residues: TP53-binding protein 1 (1972 aa).

Disordered stretches follow at residues 24–273 (DSQP…VAAM), 290–332 (QIQK…CSLA), and 346–507 (GQRS…LGLS). Residues serine 25 and serine 63 each carry the phosphoserine modification. Over residues 82–91 (EHLKENKVAD) the composition is skewed to basic and acidic residues. Positions 94–121 (DSSNLDTCGSISQVIEQLPQPNRTSSVL) are enriched in polar residues. 2 positions are modified to phosphoserine: serine 105 and serine 124. A compositionally biased stretch (basic and acidic residues) spans 138-149 (ELEQKEKEKEED). Positions 151 to 168 (SGNTTHSLGAEDTASSQL) are enriched in polar residues. Serine 166, serine 176, and serine 178 each carry phosphoserine. Residues 195–205 (LQSVTTNSGYT) are compositionally biased toward polar residues. Lysine 217 participates in a covalent cross-link: Glycyl lysine isopeptide (Lys-Gly) (interchain with G-Cter in SUMO1); alternate. A Glycyl lysine isopeptide (Lys-Gly) (interchain with G-Cter in SUMO2); alternate cross-link involves residue lysine 217. Phosphoserine is present on residues serine 222, serine 265, and serine 294. Polar residues-rich tracts occupy residues 300-322 (LSTQEDLFDQSNKTVSSDGCSTP) and 346-361 (GQRSLVQDSLSTNSSD). Threonine 302 is subject to Phosphothreonine. A phosphoserine mark is found at serine 366, serine 380, serine 395, serine 398, serine 429, serine 452, and serine 464. Residues 426–441 (STVSPQASTPISQSTP) show a composition bias toward polar residues. Positions 442–452 (VFPPGSLPIPS) are enriched in pro residues. The segment covering 481 to 490 (HSSSLTVECS) has biased composition (polar residues). The segment covering 491-501 (KTSEIEPKNSP) has biased composition (basic and acidic residues). Phosphoserine is present on residues serine 500, serine 507, serine 518, serine 523, and serine 525. The segment covering 520 to 531 (SEYSQSPKMESL) has biased composition (polar residues). The disordered stretch occupies residues 520–556 (SEYSQSPKMESLSSHRIDEDGENTQIEDTEPMSPVLN). A compositionally biased stretch (acidic residues) spans 538 to 549 (EDGENTQIEDTE). Threonine 543 and threonine 548 each carry phosphothreonine. A phosphoserine mark is found at serine 552, serine 566, and serine 580. A disordered region spans residues 568–595 (LMNPAQDGEVQLSQNDDKTKGDDTDTRD). Positions 582–595 (NDDKTKGDDTDTRD) are enriched in basic and acidic residues. Phosphoserine occurs at positions 630, 635, 639, and 640. The segment at 649-687 (EIKEHHPEEGSSGSEVEEIPETPCESQGEELKEENMESV) is disordered. At threonine 670 the chain carries Phosphothreonine. Residues serine 692, serine 724, serine 727, serine 771, serine 809, serine 830, serine 831, and serine 834 each carry the phosphoserine modification. Residues 742-911 (EQEAWEEATS…TPFHFTLPKE (170 aa)) are disordered. Residues 798–816 (AENRLDTKEEKSVEYEGDL) show a composition bias toward basic and acidic residues. Residues 839–848 (RADDPLRLDQ) show a composition bias toward basic and acidic residues. A compositionally biased stretch (polar residues) spans 849-864 (ELQQPQTQEKTSNSLT). Threonine 855 carries the phosphothreonine modification. Residue lysine 868 forms a Glycyl lysine isopeptide (Lys-Gly) (interchain with G-Cter in SUMO1); alternate linkage. Lysine 868 participates in a covalent cross-link: Glycyl lysine isopeptide (Lys-Gly) (interchain with G-Cter in SUMO2); alternate. Positions 890-902 (HASQSFCESSSET) are enriched in polar residues. At threonine 922 the chain carries Phosphothreonine. Residue lysine 930 forms a Glycyl lysine isopeptide (Lys-Gly) (interchain with G-Cter in SUMO2) linkage. Serine 970 and serine 975 each carry phosphoserine. Residue lysine 984 forms a Glycyl lysine isopeptide (Lys-Gly) (interchain with G-Cter in SUMO2) linkage. Disordered stretches follow at residues 997–1028 (EASEESLQFNLEKPATGERKNGSTAVAESVAS) and 1045–1103 (ENEA…VSPA). Residues 1018-1028 (GSTAVAESVAS) show a composition bias toward polar residues. Serine 1028 carries the phosphoserine modification. At threonine 1056 the chain carries Phosphothreonine. Serine 1068 is modified (phosphoserine). A compositionally biased stretch (basic and acidic residues) spans 1071 to 1083 (EEEKEKLEGDHTI). A phosphoserine mark is found at serine 1086, serine 1094, serine 1101, and serine 1114. Residues 1127 to 1139 (DQKEGRSTNKENP) are compositionally biased toward basic and acidic residues. Disordered regions lie at residues 1127 to 1148 (DQKEGRSTNKENPSKALIERPS), 1188 to 1232 (NFGK…QPPH), and 1269 to 1478 (VTEE…DGLD). Serine 1148 is subject to Phosphoserine. A compositionally biased stretch (polar residues) spans 1188–1200 (NFGKQDATVQTER). Threonine 1214 is subject to Phosphothreonine. Phosphoserine is present on residues serine 1216 and serine 1219. Residues 1272–1285 (ETEEPIVECQECET) show a composition bias toward acidic residues. Composition is skewed to low complexity over residues 1298 to 1307 (DLGDISSFSS) and 1316 to 1329 (SSGTSLSAMHSSGS). Phosphoserine occurs at positions 1317 and 1342. At arginine 1355 the chain carries Omega-N-methylarginine. Position 1362 is a phosphoserine (serine 1362). Lysine 1365 is covalently cross-linked (Glycyl lysine isopeptide (Lys-Gly) (interchain with G-Cter in SUMO2)). At serine 1368 the chain carries Phosphoserine. At threonine 1372 the chain carries Phosphothreonine. The GAR signature appears at 1396–1403 (RGRGRRGR). Phosphoserine is present on residues serine 1426 and serine 1430. Residue lysine 1434 forms a Glycyl lysine isopeptide (Lys-Gly) (interchain with G-Cter in SUMO1); alternate linkage. Lysine 1434 participates in a covalent cross-link: Glycyl lysine isopeptide (Lys-Gly) (interchain with G-Cter in SUMO2); alternate. Residues serine 1460, serine 1462, and serine 1474 each carry the phosphoserine modification. Residues 1484 to 1603 (NSFVGLRVVA…NRLREQYGLG (120 aa)) are tudor-like. The tract at residues 1495–1523 (WSSNGYFYSGKITRDVGAGKYKLLFDDGY) is interaction with dimethylated histone H4. Lysine 1563 is covalently cross-linked (Glycyl lysine isopeptide (Lys-Gly) (interchain with G-Cter in SUMO1); alternate). Lysine 1563 is covalently cross-linked (Glycyl lysine isopeptide (Lys-Gly) (interchain with G-Cter in SUMO2); alternate). The UDR signature appears at 1604-1631 (PYEAVTPLTKAADISLDNLVEGKRKRRS). A Phosphothreonine modification is found at threonine 1609. Residues serine 1618, serine 1631, and serine 1635 each carry the phosphoserine modification. Disordered regions lie at residues 1622 to 1719 (LVEG…EEQR) and 1745 to 1768 (LASRSKLPDGPTGSSEEEEEFLEI). Over residues 1634-1650 (SSPATPTASSSSSTTPT) the composition is skewed to low complexity. Residues threonine 1638 and threonine 1648 each carry the phosphothreonine modification. Phosphoserine occurs at positions 1656, 1673, and 1678. Lysine 1685 participates in a covalent cross-link: Glycyl lysine isopeptide (Lys-Gly) (interchain with G-Cter in ubiquitin). Phosphoserine is present on residues serine 1701, serine 1759, and serine 1778. 2 consecutive BRCT domains span residues 1724–1848 (LNKT…NYLL) and 1864–1964 (PREN…QHPK).

Homoligomer. Interacts with p53/TP53 (via the central domain). Interacts with DCLRE1C. Interacts with histone H2AX and this requires phosphorylation of H2AX on 'Ser-139'. Interacts with histone H4 that has been dimethylated at 'Lys-20' (H4K20me2). Has low affinity for histone H4 containing monomethylated 'Lys-20' (H4K20me1). Does not bind histone H4 containing unmethylated or trimethylated 'Lys-20' (H4K20me3). Has low affinity for histone H3 that has been dimethylated on 'Lys-79'. Has very low affinity for histone H3 that has been monomethylated on 'Lys-79' (in vitro). Does not bind unmethylated histone H3. Interacts with histone H2A monoubiquitinated at 'Lys-15' (H2AK15Ub). Interacts with PWWP3A/EXPAND1. Interacts with CHEK2; modulates CHEK2 phosphorylation at 'Thr-68' in response to infrared. Interacts with MSL1; this interaction may be required for MSL1 DNA repair activity, but not for histone acetyltransferase activity. Interacts (when phosphorylated by ATM) with RIF1. Interacts (via the Tudor-like domain) with NUDT16L1/TIRR; interaction masks the Tudor-like domain and prevents recruitment to chromatin. Interacts with PAXIP1. Interacts with SHLD2. Interacts (when phosphorylated) with TOPBP1. Interacts with GFI1; promoting methylation by PRMT1. Interacts with (phosphorylated) DYNLL1; specifically binds DYNLL1 phosphorylated at 'Ser-88' and promotes its recruitment to double stand breaks (DSBs). As to quaternary structure, (Microbial infection) Interacts (via C-terminus) with Epstein-Barr virus lytic switch protein BZLF1 (via C-terminus); this interaction is involved in the activation of the viral lytic cycle. In terms of processing, asymmetrically dimethylated on Arg residues by PRMT1. Methylation is required for DNA binding. Post-translationally, phosphorylated at basal level in the absence of DNA damage. Phosphorylated by ATM in response to DNA damage: phosphorylation at different sites promotes interaction with different set of proteins: phosphorylation at the N-terminus by ATM (residues from 6-178) promotes interaction with PAXIP1 and non-homologous end joining (NHEJ) of dysfunctional telomeres. Phosphorylation by ATM at residues that are located more C-terminus (residues 300-650) leads to promote interaction with RIF1. Interaction with RIF1 leads to disrupt interaction with NUDT16L1/TIRR. Phosphorylation at Thr-1609 and Ser-1618 in the UDR motif blocks interaction with H2AK15ub. Dephosphorylated by PPP4C. Hyperphosphorylation during mitosis correlates with its exclusion from chromatin and DNA lesions. Hyperphosphorylated in an ATR-dependent manner in response to DNA damage induced by UV irradiation. Dephosphorylated by PPP5C. Phosphorylation at Ser-366 and Thr-670 promotes interaction with TOPBP1. Phosphorylated by VRK1. Monoubiquitinated at Lys-1685 by MSL2 is reponse to DNA damage, leading to its stabilization.

The protein resides in the nucleus. It localises to the chromosome. The protein localises to the centromere. It is found in the kinetochore. Functionally, double-strand break (DSB) repair protein involved in response to DNA damage, telomere dynamics and class-switch recombination (CSR) during antibody genesis. Plays a key role in the repair of double-strand DNA breaks (DSBs) in response to DNA damage by promoting non-homologous end joining (NHEJ)-mediated repair of DSBs and specifically counteracting the function of the homologous recombination (HR) repair protein BRCA1. In response to DSBs, phosphorylation by ATM promotes interaction with RIF1 and dissociation from NUDT16L1/TIRR, leading to recruitment to DSBs sites. Recruited to DSBs sites by recognizing and binding histone H2A monoubiquitinated at 'Lys-15' (H2AK15Ub) and histone H4 dimethylated at 'Lys-20' (H4K20me2), two histone marks that are present at DSBs sites. Required for immunoglobulin class-switch recombination (CSR) during antibody genesis, a process that involves the generation of DNA DSBs. Participates in the repair and the orientation of the broken DNA ends during CSR. In contrast, it is not required for classic NHEJ and V(D)J recombination. Promotes NHEJ of dysfunctional telomeres via interaction with PAXIP1. The protein is TP53-binding protein 1 of Homo sapiens (Human).